The sequence spans 84 residues: Metallothionein-like protein 4A (84 aa).

Positions 1-26 (MADTGKGSSVAGCNDSCGCPSPCPGG) are disordered.

Belongs to the metallothionein superfamily. Type 15 family. Expressed specifically in seeds.

Its subcellular location is the cytoplasm. It localises to the nucleus. It is found in the cell membrane. Metallothioneins have a high content of cysteine residues that bind various heavy metals. Functions as a metal chelator of copper (Cu) and zinc (Zn). Plays a role in storing and distributing Zn ion in seed. This is Metallothionein-like protein 4A (MT4A) from Arabidopsis thaliana (Mouse-ear cress).